We begin with the raw amino-acid sequence, 371 residues long: Cytochrome b (371 aa).

Helical transmembrane passes span 25–45, 69–90, 105–125, and 170–190; these read FGSM…FLAI, WIMQ…YIHI, WLTG…GYVL, and FFAL…IHII. Heme b-binding residues include H75 and H89. Heme b is bound by residues H174 and H188. H193 is an a ubiquinone binding site. The next 4 helical transmembrane spans lie at 218–238, 280–300, 312–332, and 339–358; these read YKDL…LSFM, LGGA…PFTH, LAQT…WAAT, and FLLI…IMNP.

Belongs to the cytochrome b family. In terms of assembly, the cytochrome bc1 complex contains 3 respiratory subunits (MT-CYB, CYC1 and UQCRFS1), 2 core proteins (UQCRC1 and UQCRC2) and probably 6 low-molecular weight proteins. Heme b is required as a cofactor.

Its subcellular location is the mitochondrion inner membrane. Its function is as follows. Component of the ubiquinol-cytochrome c reductase complex (complex III or cytochrome b-c1 complex) that is part of the mitochondrial respiratory chain. The b-c1 complex mediates electron transfer from ubiquinol to cytochrome c. Contributes to the generation of a proton gradient across the mitochondrial membrane that is then used for ATP synthesis. The sequence is that of Cytochrome b (MT-CYB) from Laticauda colubrina (Yellow-lipped sea krait).